Here is a 295-residue protein sequence, read N- to C-terminus: Secreted frizzled-related protein 2 (295 aa).

An N-terminal signal peptide occupies residues Met-1–Gly-24. In terms of domain architecture, FZ spans Tyr-35 to Leu-155. Intrachain disulfides connect Cys-40/Cys-103, Cys-50/Cys-96, Cys-87/Cys-125, Cys-114/Cys-152, Cys-118/Cys-142, Cys-172/Cys-245, Cys-175/Cys-247, and Cys-190/Cys-295. An NTR domain is found at Cys-172–Cys-295.

This sequence belongs to the secreted frizzled-related protein (sFRP) family. Highly expressed in the eye. Weaker expression in heart and lung.

Its subcellular location is the secreted. Its function is as follows. Soluble frizzled-related proteins (sFRPS) function as modulators of Wnt signaling through direct interaction with Wnts. They have a role in regulating cell growth and differentiation in specific cell types. SFRP2 may be important for eye retinal development and for myogenesis. This chain is Secreted frizzled-related protein 2, found in Mus musculus (Mouse).